A 1106-amino-acid chain; its full sequence is Probable LRR receptor-like serine/threonine-protein kinase At1g74360 (1106 aa).

A signal peptide spans 1 to 34 (MTMVTRVIMTDDDSQSLCFLCFLLFFFITAIAVA). At 35 to 736 (GDSLDSDREV…PRTLLLIWIS (702 aa)) the chain is on the extracellular side. LRR repeat units follow at residues 86–109 (RSRV…NFSA), 110–134 (LTEL…LSRC), 136–156 (NLKH…LPGL), 157–182 (SNLE…LFCN), 184–204 (LVVA…IFNG), 205–226 (CRNL…WTGF), and 227–250 (GRLV…MFRG). Residues N93 and N106 are each glycosylated (N-linked (GlcNAc...) asparagine). N-linked (GlcNAc...) asparagine glycosylation occurs at N141. 2 N-linked (GlcNAc...) asparagine glycosylation sites follow: N188 and N193. N242 and N251 each carry an N-linked (GlcNAc...) asparagine glycan. LRR repeat units lie at residues 252-275 (CTLQ…VSNC), 276-299 (QNLN…IGSI), 300-323 (SSLK…LLNL), 325-346 (NLVF…IFGR), 348-371 (TQVK…NILK), 372-396 (LPNL…ISQI), 398-419 (SLKF…EYGN), 420-443 (MPGL…SFGK), 445-468 (TSLL…IGNC), 470-492 (SLLW…LTRM), 566-593 (VRTL…ISQM), 594-617 (DRLS…IGQL), 619-640 (LAFL…IGNL), 641-664 (KCLQ…LNDL), and 666-690 (ELSK…QVAT). N309 and N322 each carry an N-linked (GlcNAc...) asparagine glycan. N365, N374, N384, and N408 each carry an N-linked (GlcNAc...) asparagine glycan. N-linked (GlcNAc...) asparagine glycans are attached at residues N454 and N467. 6 N-linked (GlcNAc...) asparagine glycosylation sites follow: N623, N628, N652, N671, N709, and N713. Residues 737-757 (LALALAFIACLVVSGIVLMVV) traverse the membrane as a helical segment. Over 758-1106 (KASREAEIDL…GLSSQGYIEM (349 aa)) the chain is Cytoplasmic. 2 positions are modified to phosphothreonine: T803 and T811. The Protein kinase domain occupies 814-1095 (FSEERVVGRG…VKISGKAELF (282 aa)). Residues 820-828 (VGRGGYGTV) and K842 each bind ATP. D941 (proton acceptor) is an active-site residue. At Y983 the chain carries Phosphotyrosine. The residue at position 991 (T991) is a Phosphothreonine.

It belongs to the protein kinase superfamily. Ser/Thr protein kinase family.

It localises to the mitochondrion membrane. It catalyses the reaction L-seryl-[protein] + ATP = O-phospho-L-seryl-[protein] + ADP + H(+). The catalysed reaction is L-threonyl-[protein] + ATP = O-phospho-L-threonyl-[protein] + ADP + H(+). This is Probable LRR receptor-like serine/threonine-protein kinase At1g74360 from Arabidopsis thaliana (Mouse-ear cress).